The sequence spans 246 residues: DNA repair protein RecO (246 aa).

Belongs to the RecO family.

Functionally, involved in DNA repair and RecF pathway recombination. This chain is DNA repair protein RecO, found in Methylorubrum extorquens (strain CM4 / NCIMB 13688) (Methylobacterium extorquens).